The sequence spans 273 residues: 2-dehydro-3-deoxyphosphooctonate aldolase (273 aa).

This sequence belongs to the KdsA family.

The protein resides in the cytoplasm. It catalyses the reaction D-arabinose 5-phosphate + phosphoenolpyruvate + H2O = 3-deoxy-alpha-D-manno-2-octulosonate-8-phosphate + phosphate. It functions in the pathway carbohydrate biosynthesis; 3-deoxy-D-manno-octulosonate biosynthesis; 3-deoxy-D-manno-octulosonate from D-ribulose 5-phosphate: step 2/3. The protein operates within bacterial outer membrane biogenesis; lipopolysaccharide biosynthesis. This is 2-dehydro-3-deoxyphosphooctonate aldolase from Desulfatibacillum aliphaticivorans.